A 157-amino-acid polypeptide reads, in one-letter code: Nuclear cap-binding protein subunit 2 (157 aa).

MRNA-binding positions include tyrosine 17, tyrosine 40, 109–113 (RADWD), 120–124 (RQYGR), and 130–131 (QV). The 79-residue stretch at 37–115 (CTLYVGNLSY…RVIRADWDAG (79 aa)) folds into the RRM domain.

Belongs to the RRM NCBP2 family. As to quaternary structure, component of the nuclear cap-binding complex (CBC), a heterodimer composed of ncbp-1 and ncbp-2 that interacts with m7GpppG-capped RNA.

The protein localises to the nucleus. In terms of biological role, component of the cap-binding complex (CBC), which binds co-transcriptionally to the 5' cap of pre-mRNAs and is involved in various processes such as pre-mRNA splicing and RNA-mediated gene silencing (RNAi). The CBC complex is involved in miRNA-mediated RNA interference and is required for primary microRNAs (miRNAs) processing. In the CBC complex, ncbp-2 recognizes and binds capped RNAs (m7GpppG-capped RNA) but requires ncbp-1 to stabilize the movement of its N-terminal loop and lock the CBC into a high affinity cap-binding state with the cap structure. The chain is Nuclear cap-binding protein subunit 2 (ncbp-2) from Caenorhabditis briggsae.